A 300-amino-acid polypeptide reads, in one-letter code: NAD kinase (300 aa).

The Proton acceptor role is filled by aspartate 75. NAD(+) is bound by residues 75–76, 149–150, arginine 177, aspartate 179, 190–195, alanine 214, and glutamine 248; these read DG, ND, and TAYALS.

The protein belongs to the NAD kinase family. A divalent metal cation is required as a cofactor.

The protein localises to the cytoplasm. The catalysed reaction is NAD(+) + ATP = ADP + NADP(+) + H(+). Functionally, involved in the regulation of the intracellular balance of NAD and NADP, and is a key enzyme in the biosynthesis of NADP. Catalyzes specifically the phosphorylation on 2'-hydroxyl of the adenosine moiety of NAD to yield NADP. The chain is NAD kinase from Burkholderia cenocepacia (strain ATCC BAA-245 / DSM 16553 / LMG 16656 / NCTC 13227 / J2315 / CF5610) (Burkholderia cepacia (strain J2315)).